Reading from the N-terminus, the 272-residue chain is NH(3)-dependent NAD(+) synthetase (272 aa).

45–52 (GISGGQDS) serves as a coordination point for ATP. Asp-51 serves as a coordination point for Mg(2+). Deamido-NAD(+) is bound at residue Arg-138. Thr-158 is an ATP binding site. Residue Glu-163 coordinates Mg(2+). Deamido-NAD(+)-binding residues include Lys-171 and Asp-178. Lys-187 and Thr-209 together coordinate ATP. Deamido-NAD(+) is bound at residue 258 to 259 (HK).

Belongs to the NAD synthetase family. In terms of assembly, homodimer.

It catalyses the reaction deamido-NAD(+) + NH4(+) + ATP = AMP + diphosphate + NAD(+) + H(+). It functions in the pathway cofactor biosynthesis; NAD(+) biosynthesis; NAD(+) from deamido-NAD(+) (ammonia route): step 1/1. Functionally, catalyzes the ATP-dependent amidation of deamido-NAD to form NAD. Uses ammonia as a nitrogen source. The chain is NH(3)-dependent NAD(+) synthetase from Bacillus velezensis (strain DSM 23117 / BGSC 10A6 / LMG 26770 / FZB42) (Bacillus amyloliquefaciens subsp. plantarum).